An 820-amino-acid polypeptide reads, in one-letter code: MVRVIIKGGVWKNTEDEILKAAISKYGKNQWARISSLLVRKTPKQCKARWYEWLDPSIKKTEWSKEEDEKLLHLAKLMPTQWRTIAPLVGRTANHCLERYQKLLDQAEAQDNQATSSSLGLIGTGEAVPSADDVRRLRPGEIDPDPETKPARPDPIDMDEDEKEMLSEARARLANTQGKKAKRKARERALEQSRRLAMLQKRRELKAAGITIKQKPKKGSVDYNADVPFEKKPLPGFYDTSAETSKSYKAPIGKTLQELNNRNAGPEDATKSKRQREAEEKNKQAKQPIAGPSDEHIRKLKEADQITKRRKLNLPAAQVGQDELEAIVKIGLAGERARFLVQDGSSDATDSLLENYSALDSAKATRTPQLAAHEDSVMREANHLRLISSMQTPLLGDVNVDLQSSKSSGIQTPGSFVPQTPNPLLTPGLRNGQTPASASDSRLHADTSTPQRTPLRDNLGLNVDDSFQAGHETPRELKRARSLAQSHLRQSLSSLPAPKNDFDIVVDEQDVELQANSSSRLDNEPAMSEEDAAERDARLARQAAEEEARSEARRSQVVRRNLPRPAQVDLSRLHNQIDSRYRDRVELLVARETAQLLHHDANVHPIAGGKHPEPEAVQFDTLSDTSLITARELMRKELAEQLGFPGANQEALKRMVAASLNDDEEGMQRLEDALKQQWYEARNNKSQLVEQLEVTRAKMARIASQAAKGEKMLTKVLGGYQARSVALLNSTKEQFKALQEAAISRETFEYLGRGEQCGKADRLDSLRKEVESLARRESMAQTAYKLLAEERSTLQEHCEMLEMELLMRQAESLNEANLSA.

HTH myb-type domains are found at residues 3-58 (RVII…DPSI) and 59-108 (KKTE…DQAE). 2 DNA-binding regions (H-T-H motif) span residues 31–54 (WARISSLLVRKTPKQCKARWYEWL) and 82–104 (WRTIAPLVGRTANHCLERYQKLL). Disordered regions lie at residues 114–162 (ATSS…DEDE), 248–294 (YKAP…GPSD), 405–476 (SKSS…TPRE), and 514–560 (QANS…VVRR). A compositionally biased stretch (basic and acidic residues) spans 132-155 (DDVRRLRPGEIDPDPETKPARPDP). A coiled-coil region spans residues 160 to 205 (EDEKEMLSEARARLANTQGKKAKRKARERALEQSRRLAMLQKRREL). Residues 268-283 (DATKSKRQREAEEKNK) show a composition bias toward basic and acidic residues. 2 stretches are compositionally biased toward polar residues: residues 405 to 423 (SKSSGIQTPGSFVPQTPNP) and 431 to 452 (NGQTPASASDSRLHADTSTPQR). Coiled coils occupy residues 526 to 562 (AMSEEDAAERDARLARQAAEEEARSEARRSQVVRRNL) and 761 to 805 (DRLD…EMEL). Residues 534-554 (ERDARLARQAAEEEARSEARR) are compositionally biased toward basic and acidic residues.

The protein belongs to the CEF1 family. In terms of assembly, associated with the spliceosome.

The protein localises to the cytoplasm. The protein resides in the nucleus. Functionally, involved in pre-mRNA splicing and cell cycle control. The sequence is that of Pre-mRNA-splicing factor CEF1 (CEF1) from Mycosarcoma maydis (Corn smut fungus).